The primary structure comprises 47 residues: Delta-halcutoxin-Hcg1a (47 aa).

3 cysteine pairs are disulfide-bonded: cysteine 3/cysteine 43, cysteine 5/cysteine 33, and cysteine 26/cysteine 44.

Belongs to the sea anemone sodium channel inhibitory toxin family. Type II subfamily.

Its subcellular location is the secreted. The protein resides in the nematocyst. Is potently lethal to crabs, although it showed neither lethal activity in mice nor hemolytic activity. May bind to voltage-gated sodium channels (Nav), thereby delaying their inactivation during signal transduction. The chain is Delta-halcutoxin-Hcg1a from Isohalcurias carlgreni (Sea anemone).